Here is a 114-residue protein sequence, read N- to C-terminus: Flagellar hook-basal body complex protein FliE (114 aa).

This sequence belongs to the FliE family.

The protein localises to the bacterial flagellum basal body. The protein is Flagellar hook-basal body complex protein FliE of Burkholderia lata (strain ATCC 17760 / DSM 23089 / LMG 22485 / NCIMB 9086 / R18194 / 383).